Consider the following 141-residue polypeptide: ATP synthase epsilon chain (141 aa).

It belongs to the ATPase epsilon chain family. As to quaternary structure, F-type ATPases have 2 components, CF(1) - the catalytic core - and CF(0) - the membrane proton channel. CF(1) has five subunits: alpha(3), beta(3), gamma(1), delta(1), epsilon(1). CF(0) has three main subunits: a, b and c.

It is found in the cell inner membrane. Its function is as follows. Produces ATP from ADP in the presence of a proton gradient across the membrane. The polypeptide is ATP synthase epsilon chain (Pseudomonas syringae pv. syringae (strain B728a)).